A 504-amino-acid polypeptide reads, in one-letter code: MTWLVLLGTLLCMLRVGLGTPDSEGFPPRALHNCPYKCICAADLLSCTGLGLQDVPAELPAATADLDLSHNALQRLRPGWLAPLFQLRALHLDHNELDALGRGVFVNASGLRLLDLSSNTLRALGRHDLDGLGALEKLLLFNNRLVHLDEHAFHGLRALSHLYLGCNELASFSFDHLHGLSATHLLTLDLSSNRLGHISVPELAALPAFLKNGLYLHNNPLPCDCRLYHLLQRWHQRGLSAVRDFAREYVCLAFKVPASRVRFFQHSRVFENCSSAPALGLERPEEHLYALVGRSLRLYCNTSVPAMRIAWVSPQQELLRAPGSRDGSIAVLADGSLAIGNVQEQHAGLFVCLATGPRLHHNQTHEYNVSVHFPRPEPEAFNTGFTTLLGCAVGLVLVLLYLFAPPCRCCRRACRCRRWPQTPSPLQELSAQSSVLSTTPPDAPSRKASVHKHVVFLEPGRRGLNGRVQLAVAEEFDLYNPGGLQLKAGSESASSIGSEGPMTT.

The N-terminal stretch at Met1 to Gly19 is a signal peptide. Residues Thr20 to Thr383 are Extracellular-facing. Residues Gly25 to Ala61 form the LRRNT domain. 2 disulfide bridges follow: Cys34–Cys40 and Cys38–Cys47. 6 LRR repeats span residues Ala62–Pro83, Gln86–Asn107, Gly110–Gly133, Ala134–Gly155, Ala158–His178, and His184–Pro207. Asn107 carries an N-linked (GlcNAc...) asparagine glycan. Residues Asn219–Ser275 enclose the LRRCT domain. Intrachain disulfides connect Cys223–Cys251, Cys225–Cys273, and Cys300–Cys352. Asn272, Asn301, Asn362, and Asn368 each carry an N-linked (GlcNAc...) asparagine glycan. An Ig-like C2-type domain is found at Pro277–Ser370. The helical transmembrane segment at Gly384 to Ala404 threads the bilayer. Residues Pro405–Thr504 lie on the Cytoplasmic side of the membrane. Residues Thr422–Ala448 are disordered. Over residues Ser424 to Pro440 the composition is skewed to polar residues.

This sequence belongs to the immunoglobulin superfamily. AMIGO family. Binds AMIGO1 or AMIGO2.

It localises to the membrane. In terms of biological role, may mediate heterophilic cell-cell interaction. May contribute to signal transduction through its intracellular domain. This is Amphoterin-induced protein 3 from Homo sapiens (Human).